Consider the following 402-residue polypeptide: S-adenosylmethionine synthase (402 aa).

Residue His17 participates in ATP binding. Asp19 serves as a coordination point for Mg(2+). Glu45 is a K(+) binding site. 2 residues coordinate L-methionine: Glu58 and Gln101. The interval 101–111 (QSSDIADGVNE) is flexible loop. ATP-binding positions include 177–179 (DAK), 244–245 (RF), Asp253, 259–260 (RK), Ala276, and Lys280. Position 253 (Asp253) interacts with L-methionine. Lys284 is an L-methionine binding site.

It belongs to the AdoMet synthase family. In terms of assembly, homotetramer; dimer of dimers. The cofactor is Mg(2+). It depends on K(+) as a cofactor.

It is found in the cytoplasm. It carries out the reaction L-methionine + ATP + H2O = S-adenosyl-L-methionine + phosphate + diphosphate. It participates in amino-acid biosynthesis; S-adenosyl-L-methionine biosynthesis; S-adenosyl-L-methionine from L-methionine: step 1/1. Functionally, catalyzes the formation of S-adenosylmethionine (AdoMet) from methionine and ATP. The overall synthetic reaction is composed of two sequential steps, AdoMet formation and the subsequent tripolyphosphate hydrolysis which occurs prior to release of AdoMet from the enzyme. The sequence is that of S-adenosylmethionine synthase from Lactobacillus johnsonii (strain CNCM I-12250 / La1 / NCC 533).